We begin with the raw amino-acid sequence, 159 residues long: uncharacterized protein (159 aa).

2 consecutive transmembrane segments (helical) span residues 17-37 (ALFI…TILV) and 40-60 (LLQF…FKKY).

It localises to the cell membrane. This is an uncharacterized protein from Borreliella burgdorferi (strain ATCC 35210 / DSM 4680 / CIP 102532 / B31) (Borrelia burgdorferi).